A 301-amino-acid chain; its full sequence is B3 domain-containing protein At5g18090 (301 aa).

Positions 18–113 (FFKILRSADL…CFTVDIYQID (96 aa)) form a DNA-binding region, TF-B3 1. Disordered stretches follow at residues 123–142 (SATI…NNIY) and 153–194 (SWSE…KMKV). Over residues 133-142 (NKREQRNNIY) the composition is skewed to basic and acidic residues. A DNA-binding region (TF-B3 2) is located at residues 209–301 (VPEFTLTIKK…PTEMLVRVSK (93 aa)).

It localises to the nucleus. The chain is B3 domain-containing protein At5g18090 from Arabidopsis thaliana (Mouse-ear cress).